The sequence spans 408 residues: Phosphatidylinositol transfer protein CSR1 (408 aa).

Serine 2 is subject to N-acetylserine. Phosphoserine is present on serine 2. Positions 157–317 (ETGVIKNLEL…YLGGENDNDL (161 aa)) constitute a CRAL-TRIO domain.

This sequence belongs to the PITP family. As to quaternary structure, forms a complex with 2 TSA2 subunits. Binds phosphatidylinositol (PtdIns).

The protein resides in the cytoplasm. The protein localises to the microsome. It is found in the endosome. It catalyses the reaction a 1,2-diacyl-sn-glycero-3-phospho-(1D-myo-inositol)(in) = a 1,2-diacyl-sn-glycero-3-phospho-(1D-myo-inositol)(out). Its function is as follows. Non-classical phosphatidylinositol (PtdIns) transfer protein (PITP), which exhibits PtdIns-binding/transfer activity in the absence of detectable PtdCho-binding/transfer activity. Activates SPO14/PLD1 (phospholipase D1) by stimulating phosphoinositide synthesis via the STT4 PtdIns 4-kinase. Modulates ArfGAP function through effects on SPO14 activity. Inhibits phosphatidylcholine degradation by PLB1 (phospholipase B1). May also regulate post-Golgi membrane-trafficking events and have a role resistance to oxidative stress. Inhibits fatty acid synthase activity in response to heme depletion and oleic acid starvation, preventing saturated fatty acid (SFA) accumulation. The protein is Phosphatidylinositol transfer protein CSR1 (CSR1) of Saccharomyces cerevisiae (strain ATCC 204508 / S288c) (Baker's yeast).